A 252-amino-acid chain; its full sequence is Imidazole glycerol phosphate synthase subunit HisF (252 aa).

Catalysis depends on residues Asp11 and Asp130.

This sequence belongs to the HisA/HisF family. In terms of assembly, heterodimer of HisH and HisF.

Its subcellular location is the cytoplasm. It catalyses the reaction 5-[(5-phospho-1-deoxy-D-ribulos-1-ylimino)methylamino]-1-(5-phospho-beta-D-ribosyl)imidazole-4-carboxamide + L-glutamine = D-erythro-1-(imidazol-4-yl)glycerol 3-phosphate + 5-amino-1-(5-phospho-beta-D-ribosyl)imidazole-4-carboxamide + L-glutamate + H(+). The protein operates within amino-acid biosynthesis; L-histidine biosynthesis; L-histidine from 5-phospho-alpha-D-ribose 1-diphosphate: step 5/9. IGPS catalyzes the conversion of PRFAR and glutamine to IGP, AICAR and glutamate. The HisF subunit catalyzes the cyclization activity that produces IGP and AICAR from PRFAR using the ammonia provided by the HisH subunit. In Thermococcus gammatolerans (strain DSM 15229 / JCM 11827 / EJ3), this protein is Imidazole glycerol phosphate synthase subunit HisF.